The sequence spans 73 residues: MAGTTGERPFSDILTSIRYWIIHSITVPSLFIAGWLFVSTGLAYDVFGSPRPNEYFSNGQQEAPIVLDRFGKL.

A helical transmembrane segment spans residues 21 to 35 (IIHSITVPSLFIAGW). Histidine 23 serves as a coordination point for heme.

The protein belongs to the PsbE/PsbF family. In terms of assembly, heterodimer of an alpha subunit and a beta subunit. PSII is composed of 1 copy each of membrane proteins PsbA, PsbB, PsbC, PsbD, PsbE, PsbF, PsbH, PsbI, PsbJ, PsbK, PsbL, PsbM, PsbT, PsbY, PsbZ, Psb30/Ycf12, at least 3 peripheral proteins of the oxygen-evolving complex and a large number of cofactors. It forms dimeric complexes. Heme b is required as a cofactor.

The protein localises to the plastid. Its subcellular location is the chloroplast thylakoid membrane. In terms of biological role, this b-type cytochrome is tightly associated with the reaction center of photosystem II (PSII). PSII is a light-driven water:plastoquinone oxidoreductase that uses light energy to abstract electrons from H(2)O, generating O(2) and a proton gradient subsequently used for ATP formation. It consists of a core antenna complex that captures photons, and an electron transfer chain that converts photonic excitation into a charge separation. This Bigelowiella natans (Pedinomonas minutissima) protein is Cytochrome b559 subunit alpha.